Here is an 87-residue protein sequence, read N- to C-terminus: Small ribosomal subunit protein eS21B (87 aa).

At methionine 1 the chain carries N-acetylmethionine.

The protein belongs to the eukaryotic ribosomal protein eS21 family. In terms of assembly, component of the small ribosomal subunit (SSU). Mature yeast ribosomes consist of a small (40S) and a large (60S) subunit. The 40S small subunit contains 1 molecule of ribosomal RNA (18S rRNA) and 33 different proteins (encoded by 57 genes). The large 60S subunit contains 3 rRNA molecules (25S, 5.8S and 5S rRNA) and 46 different proteins (encoded by 81 genes). In terms of processing, N-terminally acetylated by acetyltransferase NatB.

Its subcellular location is the cytoplasm. Functionally, component of the ribosome, a large ribonucleoprotein complex responsible for the synthesis of proteins in the cell. The small ribosomal subunit (SSU) binds messenger RNAs (mRNAs) and translates the encoded message by selecting cognate aminoacyl-transfer RNA (tRNA) molecules. The large subunit (LSU) contains the ribosomal catalytic site termed the peptidyl transferase center (PTC), which catalyzes the formation of peptide bonds, thereby polymerizing the amino acids delivered by tRNAs into a polypeptide chain. The nascent polypeptides leave the ribosome through a tunnel in the LSU and interact with protein factors that function in enzymatic processing, targeting, and the membrane insertion of nascent chains at the exit of the ribosomal tunnel. eS21 is required for the processing of the 20S rRNA-precursor to mature 18S rRNA in a late step of the maturation of 40S ribosomal subunits. Has a physiological role leading to 18S rRNA stability. This is Small ribosomal subunit protein eS21B from Saccharomyces cerevisiae (strain ATCC 204508 / S288c) (Baker's yeast).